Here is a 1550-residue protein sequence, read N- to C-terminus: DNA excision repair protein ERCC-6-like 2 (1550 aa).

The interval 1-23 is disordered; that stretch reads MDPSAPQPRAETSGKDIWHPGER. The segment covering 12–22 has biased composition (basic and acidic residues); it reads TSGKDIWHPGE. One can recognise a Helicase ATP-binding domain in the interval 135-321; it reads YGHYIHGGGC…WCVMDWAVPG (187 aa). 148-155 contacts ATP; the sequence is DDMGLGKT. The short motif at 272-275 is the DEAH box element; sequence DEAH. One can recognise a Helicase C-terminal domain in the interval 512–662; the sequence is VLQQLLNHCR…CVVVGSENAK (151 aa). The Atypical PIP-box signature appears at 785–796; that stretch reads PGQLTLLQCGFS. Disordered stretches follow at residues 808-848, 914-1002, and 1354-1410; these read DSDG…TSKH, FPDN…SSLR, and AETK…TRTG. 2 stretches are compositionally biased toward basic and acidic residues: residues 830–840 and 933–953; these read EAKDAGCEKNQ and TEHTVKTRNNDNSRNTDDKRN. Phosphoserine is present on residues serine 980 and serine 983. Residues 992–1002 show a composition bias toward basic residues; that stretch reads SRVRKRASSLR. Polar residues predominate over residues 1359 to 1388; sequence SPVSSTQEIDSGKNSQASEDTVTSRSLNSE. Residues serine 1373 and serine 1376 each carry the phosphoserine modification. Residues 1389 to 1405 are compositionally biased toward basic and acidic residues; the sequence is SETRERRLENTMKDQQD.

Belongs to the SNF2/RAD54 helicase family. In terms of assembly, interacts with NEK6. Interacts (via an atypical PIP-box) with PCNA; this interaction facilitates cenrtomeric localization of ERCC6L2. Interacts with CYREN; this interaction is DNA independent. Interacts with XRCC6 and XRCC5. Phosphorylated by NEK6. Expressed in bone marrow (at protein level).

The protein localises to the nucleus. The protein resides in the cytoplasm. Its subcellular location is the cytoskeleton. It is found in the microtubule organizing center. It localises to the centrosome. The protein localises to the mitochondrion. The protein resides in the chromosome. Its subcellular location is the centromere. Functionally, promotes double-strand break (DSB) end-joining and facilitates programmed recombination by controlling how DNA ends are joined in a spatially oriented manner during repair. Also plays a role in DNA repair by restricting DNA end resection in double strand break (DSB) repair. Facilitates replication of complex DNA regions and regulates the maintenance of chromatin structure. This is DNA excision repair protein ERCC-6-like 2 from Homo sapiens (Human).